A 1378-amino-acid chain; its full sequence is DNA-directed RNA polymerase subunit beta (1378 aa).

The protein belongs to the RNA polymerase beta chain family. The RNAP catalytic core consists of 2 alpha, 1 beta, 1 beta' and 1 omega subunit. When a sigma factor is associated with the core the holoenzyme is formed, which can initiate transcription.

The enzyme catalyses RNA(n) + a ribonucleoside 5'-triphosphate = RNA(n+1) + diphosphate. DNA-dependent RNA polymerase catalyzes the transcription of DNA into RNA using the four ribonucleoside triphosphates as substrates. The polypeptide is DNA-directed RNA polymerase subunit beta (Mesorhizobium japonicum (strain LMG 29417 / CECT 9101 / MAFF 303099) (Mesorhizobium loti (strain MAFF 303099))).